Reading from the N-terminus, the 530-residue chain is Glucose-6-phosphate 1-dehydrogenase (530 aa).

Residues 53–60, arginine 87, tyrosine 162, and lysine 186 contribute to the NADP(+) site; that span reads GASGDLAK. D-glucose 6-phosphate-binding positions include lysine 186, 216–220, glutamate 254, and aspartate 273; that span reads HYLGK. Histidine 278 serves as the catalytic Proton acceptor. Arginine 372 is a binding site for NADP(+). D-glucose 6-phosphate is bound by residues lysine 375 and arginine 380. Positions 381, 385, and 408 each coordinate NADP(+). Glutamine 410 serves as a coordination point for D-glucose 6-phosphate. Residues 416-418, 436-438, arginine 502, tyrosine 518, and tryptophan 524 contribute to the NADP(+) site; these read YAK and DLT.

It belongs to the glucose-6-phosphate dehydrogenase family.

It localises to the cytoplasm. Its subcellular location is the cytosol. The enzyme catalyses D-glucose 6-phosphate + NADP(+) = 6-phospho-D-glucono-1,5-lactone + NADPH + H(+). The protein operates within carbohydrate degradation; pentose phosphate pathway; D-ribulose 5-phosphate from D-glucose 6-phosphate (oxidative stage): step 1/3. In terms of biological role, cytosolic glucose-6-phosphate dehydrogenase that catalyzes the first and rate-limiting step of the oxidative branch within the pentose phosphate pathway/shunt, an alternative route to glycolysis for the dissimilation of carbohydrates and a major source of reducing power and metabolic intermediates for fatty acid and nucleic acid biosynthetic processes. In Takifugu rubripes (Japanese pufferfish), this protein is Glucose-6-phosphate 1-dehydrogenase (g6pd).